Here is an 800-residue protein sequence, read N- to C-terminus: Protein MEI2-like 5 (800 aa).

RRM domains are found at residues arginine 168–proline 241 and glycine 253–proline 326. 2 positions are modified to phosphoserine: serine 384 and serine 390. Disordered stretches follow at residues glycine 470–threonine 489 and valine 776–serine 800. Over residues serine 471–serine 488 the composition is skewed to low complexity. A phosphoserine mark is found at serine 789 and serine 792.

Functionally, probable RNA-binding protein that plays a role in meiosis and vegetative growth. The protein is Protein MEI2-like 5 (ML5) of Arabidopsis thaliana (Mouse-ear cress).